A 294-amino-acid polypeptide reads, in one-letter code: 4-hydroxy-tetrahydrodipicolinate synthase (294 aa).

Thr-46 contacts pyruvate. The active-site Proton donor/acceptor is the Tyr-135. The active-site Schiff-base intermediate with substrate is the Lys-164. Ile-205 contributes to the pyruvate binding site.

This sequence belongs to the DapA family. As to quaternary structure, homotetramer; dimer of dimers.

It is found in the cytoplasm. It carries out the reaction L-aspartate 4-semialdehyde + pyruvate = (2S,4S)-4-hydroxy-2,3,4,5-tetrahydrodipicolinate + H2O + H(+). It functions in the pathway amino-acid biosynthesis; L-lysine biosynthesis via DAP pathway; (S)-tetrahydrodipicolinate from L-aspartate: step 3/4. Catalyzes the condensation of (S)-aspartate-beta-semialdehyde [(S)-ASA] and pyruvate to 4-hydroxy-tetrahydrodipicolinate (HTPA). In Nitratiruptor sp. (strain SB155-2), this protein is 4-hydroxy-tetrahydrodipicolinate synthase.